A 614-amino-acid polypeptide reads, in one-letter code: Lamin-2 (614 aa).

A compositionally biased stretch (basic residues) spans 1-10; it reads MSAQVSKKRG. The disordered stretch occupies residues 1 to 51; sequence MSAQVSKKRGGSNPPKTGQHAASSTTSRTESSATSQTIYERQEVETRTQRT. The interval 1-76 is head; that stretch reads MSAQVSKKRG…GTAGLAGSPL (76 aa). Residues 21–37 show a composition bias toward low complexity; it reads AASSTTSRTESSATSQT. A coil 1A region spans residues 77-117; that stretch reads SRHQEKEEFKLLNNRFANYIDTIRAQQEEISVLRRKVETVS. The IF rod domain maps to 81 to 433; that stretch reads EKEEFKLLNN…ALLRTEEERL (353 aa). The tract at residues 118–128 is linker 1; that stretch reads SKEVVENQKIK. The coil 1B stretch occupies residues 129-268; the sequence is ERYNLEIANL…EEIVSLRNQR (140 aa). A linker 2 region spans residues 269–286; the sequence is RTEITEVETRMGEEYQSK. Residues 287–426 are coil 2; it reads IVEQLNDLRA…AELATYNALL (140 aa). Positions 427-611 are tail; the sequence is RTEEERLNMK…ADSSDHQKNC (185 aa). The interval 433–454 is disordered; the sequence is LNMKSPPFPSTPDSQRRGTKRR. The Nuclear localization signal motif lies at 449–458; it reads RGTKRRIADS. Positions 462 to 581 constitute an LTD domain; it reads TRFRNEASAT…VARREMTQSS (120 aa). Cys-611 carries the S-farnesyl cysteine lipid modification. A propeptide spans 612–614 (removed in mature form); the sequence is VIM.

Belongs to the intermediate filament family.

Its subcellular location is the nucleus inner membrane. In terms of biological role, intermediate filament (IF) protein, component of the nuclear lamina, a fibrous layer on the nucleoplasmic side of the inner nuclear membrane, which is thought to provide a framework for the nuclear envelope. The polypeptide is Lamin-2 (Hypsibius exemplaris (Freshwater tardigrade)).